We begin with the raw amino-acid sequence, 455 residues long: Argininosuccinate lyase (455 aa).

The protein belongs to the lyase 1 family. Argininosuccinate lyase subfamily.

The protein resides in the cytoplasm. It catalyses the reaction 2-(N(omega)-L-arginino)succinate = fumarate + L-arginine. The protein operates within amino-acid biosynthesis; L-arginine biosynthesis; L-arginine from L-ornithine and carbamoyl phosphate: step 3/3. The protein is Argininosuccinate lyase of Shewanella baltica (strain OS185).